The chain runs to 202 residues: MGCCGCSGGCGSGCGGCGSGCGGCGSGCGGYGSGCGGCGSSCCVPVCCCKPVCCCVPACSCSSCGSCGGSKGDCGSCGGSKGGCGSCGGSKGGCGSCGGSKGGCGSCGGSKGGCGSCGGSKGGCGSCGGSKGGCGSCGCSQCNCCKPCCCSSGCGSCCQSSCCNPCCCQSSCCVPVCCQSSCCKPCCCQSSCCVPVCCQCKI.

Tandem repeats lie at residues 48–51, 54–57, 144–147, 162–165, 172–175, 182–185, and 192–195. Positions 48–195 are 7 X 4 AA repeats of C-C-X-P; sequence CCKPVCCCVP…CCCQSSCCVP (148 aa).

This sequence belongs to the KRTAP type 5 family. Interacts with hair keratins. In terms of tissue distribution, expressed in hair root but not in skin. Expressed also in brain and skeletal muscle.

In the hair cortex, hair keratin intermediate filaments are embedded in an interfilamentous matrix, consisting of hair keratin-associated protein (KRTAP), which are essential for the formation of a rigid and resistant hair shaft through their extensive disulfide bond cross-linking with abundant cysteine residues of hair keratins. The matrix proteins include the high-sulfur and high-glycine-tyrosine keratins. The chain is Keratin-associated protein 5-10 (KRTAP5-10) from Homo sapiens (Human).